Consider the following 566-residue polypeptide: F-box/WD repeat-containing protein 5 (566 aa).

The 47-residue stretch at 3 to 49 (EGGTPLLPDSLVYQIFLSLGPADVLAAGLVCRQWQAVSRDEFLWREQ) folds into the F-box domain. WD repeat units lie at residues 83-125 (VEVQ…DLTI), 126-178 (SLLH…LDSF), 179-238 (ALLS…VKRL), and 239-281 (FKIQ…RIFD). Phosphoserine; by PLK4 is present on S151. Residue S284 is modified to Phosphoserine. The D-box motif lies at 303–311 (RHFLDRVLE). 3 WD repeats span residues 394–447 (ALDH…DLLV), 458–501 (RALR…RHYN), and 502–539 (ICLA…KAWR).

It belongs to the FBXW5 family. Part of the SCF (SKP1-CUL1-F-box) E3 ubiquitin-protein ligase complex SCF(FBXW5) composed of CUL1, SKP1, RBX1 and FBXW5. Component of the DCX(FBXW5) E3 ubiquitin ligase complex, at least composed of (CUL4A or CUL4B), DDB1, FBXW5 and RBX1. Interacts with CDC20, EPS8, TSC1, TSC2 and SASS6. Interacts with TNFAIP8L1; TNFAIP8L1 competes with TSC2 to bind FBXW5 increasing TSC2 stability by preventing its ubiquitination. Post-translationally, phosphorylated at Ser-151 by PLK4 during the G1/S transition, leading to inhibit its ability to ubiquitinate SASS6. In terms of processing, ubiquitinated and degraded by the APC/C complex during mitosis and G1 phase.

It is found in the cytoplasm. It participates in protein modification; protein ubiquitination. Substrate recognition component of both SCF (SKP1-CUL1-F-box protein) and DCX (DDB1-CUL4-X-box) E3 ubiquitin-protein ligase complexes. Substrate recognition component of the SCF(FBXW5) E3 ubiquitin-protein ligase complex which mediates the ubiquitination and subsequent proteasomal degradation of SASS6 during S phase, leading to prevent centriole reduplication. The SCF(FBXW5) complex also mediates ubiquitination and degradation of actin-regulator EPS8 during G2 phase, leading to the transient degradation of EPS8 and subsequent cell shape changes required to allow mitotic progression. Substrate-specific adapter of the DCX(FBXW5) E3 ubiquitin-protein ligase complex which mediates the polyubiquitination and subsequent degradation of TSC2. May also act as a negative regulator of MAP3K7/TAK1 signaling in the interleukin-1B (IL1B) signaling pathway. This Homo sapiens (Human) protein is F-box/WD repeat-containing protein 5 (FBXW5).